A 463-amino-acid polypeptide reads, in one-letter code: Perilipin-5 (463 aa).

The interaction with LIPE stretch occupies residues 1–108; sequence MSEEEAAQIP…KLEEKLPFLQ (108 aa). Positions 1–173 are essential for lipid droplet targeting; sequence MSEEEAAQIP…HFLPMTEEEL (173 aa). A phosphoserine mark is found at Ser-2, Ser-148, and Ser-322. Residues 185-463 are interaction with PNPLA2 and ABHD5; it reads VGSVEDQRRQ…KHTLMPELDF (279 aa). The tract at residues 444-463 is recruits mitochondria at the lipid droplet surface; sequence QEPETPSCPVKHTLMPELDF.

This sequence belongs to the perilipin family. Homooligomer. Interacts with PNPLA2; prevents interaction of PNPLA2 with ABHD5. Interacts with ABHD5; targets ABHD5 to lipid droplets and promotes interaction of ABHD5 with PNPLA2. Interacts with LIPE. Phosphorylated by PKA. Phosphorylated on serine in skeletal muscle at rest or upon lipolytic stimulation. As to expression, expressed in skeletal muscle, liver, heart and kidney.

The protein localises to the lipid droplet. Its subcellular location is the cytoplasm. It is found in the mitochondrion. Its function is as follows. Lipid droplet-associated protein that maintains the balance between lipogenesis and lipolysis and also regulates fatty acid oxidation in oxidative tissues. Recruits mitochondria to the surface of lipid droplets and is involved in lipid droplet homeostasis by regulating both the storage of fatty acids in the form of triglycerides and the release of fatty acids for mitochondrial fatty acid oxidation. In lipid droplet triacylglycerol hydrolysis, plays a role as a scaffolding protein for three major key lipolytic players: ABHD5, PNPLA2 and LIPE. Reduces the triacylglycerol hydrolase activity of PNPLA2 by recruiting and sequestering PNPLA2 to lipid droplets. Phosphorylation by PKA enables lipolysis probably by promoting release of ABHD5 from the perilipin scaffold and by facilitating interaction of ABHD5 with PNPLA2. Also increases lipolysis through interaction with LIPE and upon PKA-mediated phosphorylation of LIPE. The sequence is that of Perilipin-5 (PLIN5) from Homo sapiens (Human).